A 421-amino-acid chain; its full sequence is MLKEEDKIFTNLHGQQSHDLKSSKKRGDWENTKALLDKGRDFIVEEVKKSGLRGRGGAGFSTGMKWSFMPKNLEKSCYLVVNADESEPGTCKDRDILRFEPHKLIEGCLLASFAIGANNCYIYIRGEFYNEASNIQRALDEAYKEGLIGKNSCGSGFDCNIYLHRGAGAYICGEETALLESLEGKKGMPRLKPPFPAGFGLYGCPTTINNVESIAVVPTILRRGASWFAGIGKPNNTGTKIFCISGHVNKPCNVEEAMGISLKELIEKYAGGVRGGWDNLKAIIPGGSSVPLLPKSLCEVDMDFDSLRTAGSGLGTGGIIVMDQSTDIIYAIARLSKFYMHESCGQCTPCREGTGWMWRVMMRLVKGNVKKSEIDELLNVTKEIEGHTICALGDAAAWPIQGLIRHFRSEIEARIKSDSVV.

54–63 (GRGGAGFSTG) provides a ligand contact to NAD(+). 166 to 213 (GAGAYICGEETALLESLEGKKGMPRLKPPFPAGFGLYGCPTTINNVES) serves as a coordination point for FMN. The [4Fe-4S] cluster site is built by C344, C347, C350, and C390.

Belongs to the complex I 51 kDa subunit family. FMN serves as cofactor. [4Fe-4S] cluster is required as a cofactor.

It catalyses the reaction a quinone + NADH + 5 H(+)(in) = a quinol + NAD(+) + 4 H(+)(out). Functionally, NDH-1 shuttles electrons from NADH, via FMN and iron-sulfur (Fe-S) centers, to quinones in the respiratory chain. Couples the redox reaction to proton translocation (for every two electrons transferred, four hydrogen ions are translocated across the cytoplasmic membrane), and thus conserves the redox energy in a proton gradient. The polypeptide is NADH-quinone oxidoreductase subunit F (nuoF) (Rickettsia conorii (strain ATCC VR-613 / Malish 7)).